The following is a 271-amino-acid chain: NADPH-dependent 7-cyano-7-deazaguanine reductase (271 aa).

81–83 (IES) serves as a coordination point for substrate. 83-84 (SK) serves as a coordination point for NADPH. C177 functions as the Thioimide intermediate in the catalytic mechanism. Residue D184 is the Proton donor of the active site. A substrate-binding site is contributed by 216–217 (HE). Residue 245–246 (RG) coordinates NADPH.

Belongs to the GTP cyclohydrolase I family. QueF type 2 subfamily. In terms of assembly, homodimer.

It localises to the cytoplasm. The catalysed reaction is 7-aminomethyl-7-carbaguanine + 2 NADP(+) = 7-cyano-7-deazaguanine + 2 NADPH + 3 H(+). It participates in tRNA modification; tRNA-queuosine biosynthesis. Catalyzes the NADPH-dependent reduction of 7-cyano-7-deazaguanine (preQ0) to 7-aminomethyl-7-deazaguanine (preQ1). This is NADPH-dependent 7-cyano-7-deazaguanine reductase from Xanthomonas axonopodis pv. citri (strain 306).